The sequence spans 117 residues: Fluoride-specific ion channel FluC 2 (117 aa).

A run of 4 helical transmembrane segments spans residues 1-21 (MISI…RSAI), 33-53 (LPIA…LTIG), 60-80 (WFPA…STLA), and 95-115 (LFLN…YIGY). Residues Gly-71 and Thr-74 each contribute to the Na(+) site.

This sequence belongs to the fluoride channel Fluc/FEX (TC 1.A.43) family.

The protein localises to the cell membrane. The enzyme catalyses fluoride(in) = fluoride(out). With respect to regulation, na(+) is not transported, but it plays an essential structural role and its presence is essential for fluoride channel function. Its function is as follows. Fluoride-specific ion channel. Important for reducing fluoride concentration in the cell, thus reducing its toxicity. The chain is Fluoride-specific ion channel FluC 2 from Staphylococcus aureus (strain COL).